Reading from the N-terminus, the 411-residue chain is MYKPKNINSVLTFYKDQIQLVVSDDQNQFNILFYQTIDNDGFYSKQQLKNKLRLKLALNQLVDQANYFLGFKLEKVVVVLAELIDDLKIHNFKSEIFFTGYDFDHKAMIKKEKQRFCEQNNQLTVMDTMVLNYHDVINNKITKSFAFNKSYVANLVAYSSKSNLIGELKFFLKRNVNLKVKKIISHHLALANSLSKKQNNMFVYLGQKTTELMLFMDNALVDVITNQFGKNHFIDIPANQENKPLLEFLVDNTTKIGDCYSLGMTYTDGDSYKEIKALTIGDLMQTVSDKIKTLIDFINSGSLTFFNKFKTLPKLLYFYTRSKQITNLFQANVALINPQFKTVDIYKNKIQFISENYLLSCEAISLQITNRIKNQISFDFTNADNIQKPKPKKHFMILSKHLTKFVQRLVK.

This is an uncharacterized protein from Mycoplasma genitalium (strain ATCC 33530 / DSM 19775 / NCTC 10195 / G37) (Mycoplasmoides genitalium).